The primary structure comprises 308 residues: uncharacterized protein (308 aa).

Positions 5–236 constitute an ABC transporter domain; the sequence is LELQQLKKTY…LKSETFILDL (232 aa). 38-45 contributes to the ATP binding site; sequence GPNGAGKS.

The protein belongs to the ABC transporter superfamily.

This is an uncharacterized protein from Escherichia coli (strain K12).